The primary structure comprises 706 residues: DNA ligase (706 aa).

NAD(+)-binding positions include 47 to 51 (DSEYD), 96 to 97 (SI), and Glu133. Residue Lys135 is the N6-AMP-lysine intermediate of the active site. The NAD(+) site is built by Arg156, Glu192, Lys323, and Lys347. Zn(2+) contacts are provided by Cys441, Cys444, Cys459, and Cys465. The BRCT domain maps to 624-706 (VAPKPLSGKT…MRLLASAEAE (83 aa)).

The protein belongs to the NAD-dependent DNA ligase family. LigA subfamily. Mg(2+) is required as a cofactor. The cofactor is Mn(2+).

It carries out the reaction NAD(+) + (deoxyribonucleotide)n-3'-hydroxyl + 5'-phospho-(deoxyribonucleotide)m = (deoxyribonucleotide)n+m + AMP + beta-nicotinamide D-nucleotide.. DNA ligase that catalyzes the formation of phosphodiester linkages between 5'-phosphoryl and 3'-hydroxyl groups in double-stranded DNA using NAD as a coenzyme and as the energy source for the reaction. It is essential for DNA replication and repair of damaged DNA. The polypeptide is DNA ligase (Polaromonas sp. (strain JS666 / ATCC BAA-500)).